The following is a 425-amino-acid chain: Serine--tRNA ligase (425 aa).

Thr232–Glu234 lines the L-serine pocket. Residues Arg263–Glu265 and Val279 each bind ATP. An L-serine-binding site is contributed by Glu286. An ATP-binding site is contributed by Glu350–Ser353. Residue Thr387 participates in L-serine binding.

This sequence belongs to the class-II aminoacyl-tRNA synthetase family. Type-1 seryl-tRNA synthetase subfamily. In terms of assembly, homodimer. The tRNA molecule binds across the dimer.

Its subcellular location is the cytoplasm. The catalysed reaction is tRNA(Ser) + L-serine + ATP = L-seryl-tRNA(Ser) + AMP + diphosphate + H(+). It catalyses the reaction tRNA(Sec) + L-serine + ATP = L-seryl-tRNA(Sec) + AMP + diphosphate + H(+). The protein operates within aminoacyl-tRNA biosynthesis; selenocysteinyl-tRNA(Sec) biosynthesis; L-seryl-tRNA(Sec) from L-serine and tRNA(Sec): step 1/1. Functionally, catalyzes the attachment of serine to tRNA(Ser). Is also able to aminoacylate tRNA(Sec) with serine, to form the misacylated tRNA L-seryl-tRNA(Sec), which will be further converted into selenocysteinyl-tRNA(Sec). The chain is Serine--tRNA ligase from Methanoregula boonei (strain DSM 21154 / JCM 14090 / 6A8).